Here is a 202-residue protein sequence, read N- to C-terminus: Superoxide dismutase [Mn], mitochondrial (202 aa).

A mitochondrion-targeting transit peptide spans 1-5; that stretch reads HGRGM. His-31 contributes to the Mn(2+) binding site. Tyr-39 is modified (3'-nitrotyrosine). The residue at position 49 (Lys-49) is an N6-acetyllysine; alternate. An N6-succinyllysine; alternate modification is found at Lys-49. His-79 lines the Mn(2+) pocket. Lys-95 carries the N6-acetyllysine modification. N6-acetyllysine; alternate is present on residues Lys-103 and Lys-111. An N6-succinyllysine; alternate mark is found at Lys-103 and Lys-111. 2 residues coordinate Mn(2+): Asp-164 and His-168. Lys-183 bears the N6-acetyllysine mark.

The protein belongs to the iron/manganese superoxide dismutase family. Homotetramer. Requires Mn(2+) as cofactor. In terms of processing, nitrated under oxidative stress. Nitration coupled with oxidation inhibits the catalytic activity. Acetylation at Lys-122 decreases enzymatic activity. Deacetylated by SIRT3 upon exposure to ionizing radiations or after long fasting. Post-translationally, polyubiquitinated; leading to proteasomal degradation. Deubiquitinated by USP36 which increases protein stability.

The protein localises to the mitochondrion matrix. It carries out the reaction 2 superoxide + 2 H(+) = H2O2 + O2. Destroys superoxide anion radicals which are normally produced within the cells and which are toxic to biological systems. The sequence is that of Superoxide dismutase [Mn], mitochondrial (SOD2) from Oryctolagus cuniculus (Rabbit).